The following is a 183-amino-acid chain: Adenine phosphoribosyltransferase (183 aa).

It belongs to the purine/pyrimidine phosphoribosyltransferase family. Homodimer.

Its subcellular location is the cytoplasm. It catalyses the reaction AMP + diphosphate = 5-phospho-alpha-D-ribose 1-diphosphate + adenine. It functions in the pathway purine metabolism; AMP biosynthesis via salvage pathway; AMP from adenine: step 1/1. Functionally, catalyzes a salvage reaction resulting in the formation of AMP, that is energically less costly than de novo synthesis. This chain is Adenine phosphoribosyltransferase, found in Escherichia coli O157:H7.